The sequence spans 608 residues: Probable potassium transport system protein Kup (608 aa).

A run of 12 helical transmembrane segments spans residues 9-29 (LSGVTLAAIGVVYGDIGTSPL), 46-66 (PAAILGFLSLIFWLLILVVSV), 99-119 (TPVLIILGLIGGSFFYGEVVI), 137-157 (PSLDPYIVPLSVLVLTLLFAI), 165-185 (VGKLFAPIMLTWFLTLAVLGL), 213-233 (TSFFALGAVVLAITGVEALYA), 247-267 (WFVVVLPSLVLNYFGQGALLL), 285-305 (ALLPLLVLATMATVIASQAVI), 337-357 (IYIPVINWILYISVVIVIMSF), 363-383 (LAAAYGIAVTGTMVLTSILFC), 396-416 (LVAALFALLLAIDVPLFAANL), and 419-439 (IFSGGWLPLTLGAVMFTLMTS).

The protein belongs to the HAK/KUP transporter (TC 2.A.72) family.

The protein localises to the cell inner membrane. The enzyme catalyses K(+)(in) + H(+)(in) = K(+)(out) + H(+)(out). Functionally, transport of potassium into the cell. Likely operates as a K(+):H(+) symporter. The polypeptide is Probable potassium transport system protein Kup (Aeromonas salmonicida (strain A449)).